Reading from the N-terminus, the 431-residue chain is Protein translocase subunit SecY 1 (431 aa).

10 consecutive transmembrane segments (helical) span residues 18–38 (IYFT…TVPG), 67–87 (YSIF…IQLL), 115–135 (YLTL…FNAL), 150–170 (VEIA…GDEI), 178–198 (GVSV…LYQI), 215–235 (ILFF…VTWV), 268–288 (VIPV…LMAF), 312–332 (GVII…FVQV), 365–385 (LIKL…LPQL), and 392–412 (LPSS…VVLE).

This sequence belongs to the SecY/SEC61-alpha family. In terms of assembly, component of the Sec protein translocase complex. Heterotrimer consisting of SecY, SecE and SecG subunits. The heterotrimers can form oligomers, although 1 heterotrimer is thought to be able to translocate proteins. Interacts with the ribosome. Interacts with SecDF, and other proteins may be involved. Interacts with SecA.

It is found in the cell membrane. In terms of biological role, the central subunit of the protein translocation channel SecYEG. Consists of two halves formed by TMs 1-5 and 6-10. These two domains form a lateral gate at the front which open onto the bilayer between TMs 2 and 7, and are clamped together by SecE at the back. The channel is closed by both a pore ring composed of hydrophobic SecY resides and a short helix (helix 2A) on the extracellular side of the membrane which forms a plug. The plug probably moves laterally to allow the channel to open. The ring and the pore may move independently. This Lactobacillus kefiranofaciens subsp. kefiranofaciens protein is Protein translocase subunit SecY 1.